Consider the following 577-residue polypeptide: Isocitrate dehydrogenase kinase/phosphatase (577 aa).

Residues 318-324 (APGVRGM) and Lys339 each bind ATP. Residue Asp374 is part of the active site.

It belongs to the AceK family.

Its subcellular location is the cytoplasm. The enzyme catalyses L-seryl-[isocitrate dehydrogenase] + ATP = O-phospho-L-seryl-[isocitrate dehydrogenase] + ADP + H(+). Its function is as follows. Bifunctional enzyme which can phosphorylate or dephosphorylate isocitrate dehydrogenase (IDH) on a specific serine residue. This is a regulatory mechanism which enables bacteria to bypass the Krebs cycle via the glyoxylate shunt in response to the source of carbon. When bacteria are grown on glucose, IDH is fully active and unphosphorylated, but when grown on acetate or ethanol, the activity of IDH declines drastically concomitant with its phosphorylation. This is Isocitrate dehydrogenase kinase/phosphatase from Pseudomonas aeruginosa (strain UCBPP-PA14).